A 218-amino-acid chain; its full sequence is Dual specificity protein phosphatase TpbA (218 aa).

The first 28 residues, 1 to 28, serve as a signal peptide directing secretion; that stretch reads MHRSPLAWLRLLLAAVLGAFLLGGPLHA. Residues 44–188 enclose the Tyrosine-protein phosphatase domain; it reads DPSINLYRMS…YVRGADVDGL (145 aa). Residue Asp-105 is the Proton donor/acceptor of the active site. Cys-132 acts as the Phosphocysteine intermediate in catalysis.

Belongs to the protein-tyrosine phosphatase family.

Its subcellular location is the periplasm. The catalysed reaction is O-phospho-L-tyrosyl-[protein] + H2O = L-tyrosyl-[protein] + phosphate. It catalyses the reaction O-phospho-L-threonyl-[protein] + H2O = L-threonyl-[protein] + phosphate. The enzyme catalyses O-phospho-L-seryl-[protein] + H2O = L-seryl-[protein] + phosphate. Its function is as follows. Phosphatase that regulates diverse phenotypes in P.aeruginosa via regulation of the concentration of cellular c-di-GMP. Acts by dephosphorylating the membrane-anchored diguanylate cyclase TpbB at tyrosine and serine/threonine sites, leading to inactivation of TpbB and reduced c-di-GMP production. In vitro shows phosphatase activity toward p-nitrophenyl phosphate (pNPP) and tyrosine phosphopeptides. Can efficiently dephosphorylate two phosphorylated peptides derived from the periplasmic domain of TpbB, with a strong preference for Tyr-48 over Tyr-62. In Pseudomonas aeruginosa (strain ATCC 15692 / DSM 22644 / CIP 104116 / JCM 14847 / LMG 12228 / 1C / PRS 101 / PAO1), this protein is Dual specificity protein phosphatase TpbA.